Consider the following 352-residue polypeptide: Uroporphyrinogen decarboxylase (352 aa).

Residues 26–30 (RQAGR), D76, Y153, S208, and H323 contribute to the substrate site.

The protein belongs to the uroporphyrinogen decarboxylase family. As to quaternary structure, homodimer.

Its subcellular location is the cytoplasm. It catalyses the reaction uroporphyrinogen III + 4 H(+) = coproporphyrinogen III + 4 CO2. The protein operates within porphyrin-containing compound metabolism; protoporphyrin-IX biosynthesis; coproporphyrinogen-III from 5-aminolevulinate: step 4/4. In terms of biological role, catalyzes the decarboxylation of four acetate groups of uroporphyrinogen-III to yield coproporphyrinogen-III. The protein is Uroporphyrinogen decarboxylase of Synechococcus sp. (strain CC9605).